The following is a 516-amino-acid chain: Cyclic AMP response element-binding protein A (516 aa).

Residues Ser75, Ser79, and Ser82 each carry the phosphoserine modification. Disordered stretches follow at residues 213–237 (KDEP…SQHQ), 294–338 (KSEK…HLFA), and 353–408 (PAGG…KGST). Over residues 221–237 (SSCPASPTSQASSSQHQ) the composition is skewed to low complexity. Residues 361 to 392 (RVSRTAASITRSSSGSASASGSSTSSTVTTTR) show a composition bias toward low complexity. Positions 441-504 (SLKKIRRKIK…ANLLSQLHKL (64 aa)) constitute a bZIP domain. The basic motif stretch occupies residues 443 to 463 (KKIRRKIKNKISAQESRRKKK). The leucine-zipper stretch occupies residues 469–476 (LERRVEIL).

Belongs to the bZIP family. In terms of assembly, may bind DNA as heterodimers with other bZIP proteins. As to expression, in all cell types examined, including developing salivary gland in embryos and in adults, brain and optic lobe cell bodies, salivary gland, midgut epithelial cells of the cardia, female ovarian columnar follicle cells and male seminal vesicle, ejaculatory duct, and ejaculatory bulb.

The protein localises to the nucleus. Its function is as follows. Transcriptional activator. Binds to fat body-specific enhancers of alcohol dehydrogenase (ADH) and yolk protein genes. BBF-2 may play a role in fat body gene expression. It binds the consensus sequence 5'-T[AC]NACGTAN[TG]C-3'. This is Cyclic AMP response element-binding protein A (CrebA) from Drosophila melanogaster (Fruit fly).